We begin with the raw amino-acid sequence, 115 residues long: Large ribosomal subunit protein eL36 (115 aa).

The protein belongs to the eukaryotic ribosomal protein eL36 family. In terms of assembly, component of the large ribosomal subunit.

The protein resides in the cytoplasm. The protein localises to the cytosol. Component of the large ribosomal subunit. The polypeptide is Large ribosomal subunit protein eL36 (RpL36) (Drosophila melanogaster (Fruit fly)).